A 587-amino-acid chain; its full sequence is Inorganic phosphate transporter 2-1, chloroplastic (587 aa).

Residues 1–71 (MTLPYRFSSV…VCPLASFSSY (71 aa)) constitute a chloroplast transit peptide. Positions 74–106 (SEGEEQHHADQPIQNPHESSTVSNESDGKGNAE) are disordered. The segment covering 85–98 (PIQNPHESSTVSNE) has biased composition (polar residues). Helical transmembrane passes span 127-147 (AISIVIAFSALTLPIFMKSLG), 154-174 (TKLLSYATLLFGFYMAWNIGA), 195-215 (AVMTAAVLEFSGALLMGTHVT), 233-253 (MLLFAGLLSSLAAAGTWLQVA), 265-285 (CIVGSMVGFGLVYGGAGAVFW), 289-309 (AKVASSWVISPILGALVSFLV), 327-347 (AAAAAPVAVFVGVASISSAAL), 352-372 (IFPIALSQALACGVAGAIVFD), 413-433 (LEIVYGIFGYMQVLSACFMSF), 465-485 (IVIPMDVLAWGGFGIVAGLTM), 523-543 (LGLPISATHTLVGAVMGVGFA), and 559-579 (ASWLVTIPVGATLAVIYTWIF).

It belongs to the inorganic phosphate transporter (PiT) (TC 2.A.20.2) family. Mostly expressed in young green tissues. Present in both auto- and heterotrophic tissues. Also expressed in root stele.

The protein localises to the plastid. It is found in the chloroplast inner membrane. Functionally, low affinity H(+)/Pi chloroplastic cotransporter. Involved in inorganic phosphate (orthophosphate, Pi) uptake in green parts of plants in Pi-sufficient conditions. Required for Pi retranslocation during Pi deprivation. In Arabidopsis thaliana (Mouse-ear cress), this protein is Inorganic phosphate transporter 2-1, chloroplastic (PHT2-1).